We begin with the raw amino-acid sequence, 297 residues long: Acetylglutamate kinase (297 aa).

Substrate is bound by residues 68–69 (GG), Arg90, and Asn195.

The protein belongs to the acetylglutamate kinase family. ArgB subfamily.

Its subcellular location is the cytoplasm. It catalyses the reaction N-acetyl-L-glutamate + ATP = N-acetyl-L-glutamyl 5-phosphate + ADP. It functions in the pathway amino-acid biosynthesis; L-arginine biosynthesis; N(2)-acetyl-L-ornithine from L-glutamate: step 2/4. Functionally, catalyzes the ATP-dependent phosphorylation of N-acetyl-L-glutamate. The chain is Acetylglutamate kinase from Mesorhizobium japonicum (strain LMG 29417 / CECT 9101 / MAFF 303099) (Mesorhizobium loti (strain MAFF 303099)).